The sequence spans 389 residues: Succinate--CoA ligase [ADP-forming] subunit beta (389 aa).

The ATP-grasp domain occupies 9–244 (KAVLAKYGVP…LTEEDPAEVE (236 aa)). Residues Lys46, 53 to 55 (GRG), Glu99, Ser102, and Glu107 contribute to the ATP site. Mg(2+)-binding residues include Asn199 and Asp213. Residues Asn264 and 321-323 (GIM) contribute to the substrate site.

Belongs to the succinate/malate CoA ligase beta subunit family. In terms of assembly, heterotetramer of two alpha and two beta subunits. Requires Mg(2+) as cofactor.

The enzyme catalyses succinate + ATP + CoA = succinyl-CoA + ADP + phosphate. It catalyses the reaction GTP + succinate + CoA = succinyl-CoA + GDP + phosphate. It participates in carbohydrate metabolism; tricarboxylic acid cycle; succinate from succinyl-CoA (ligase route): step 1/1. In terms of biological role, succinyl-CoA synthetase functions in the citric acid cycle (TCA), coupling the hydrolysis of succinyl-CoA to the synthesis of either ATP or GTP and thus represents the only step of substrate-level phosphorylation in the TCA. The beta subunit provides nucleotide specificity of the enzyme and binds the substrate succinate, while the binding sites for coenzyme A and phosphate are found in the alpha subunit. This is Succinate--CoA ligase [ADP-forming] subunit beta from Parvibaculum lavamentivorans (strain DS-1 / DSM 13023 / NCIMB 13966).